Here is a 432-residue protein sequence, read N- to C-terminus: MADVTFDYRNLLEVEGGLTGRELEEISPRLRAAVGTLLEDPPGFMRLPRTREHLEASLEVAERVRSDGATDFVHVGIGGSALGPMVLHRALSHPFYNLLPDRGGPRLHFAENADPATLSGILDVIEPEGTWVNVVTKSGSTAETMANFLVIRGALAEALGDFGYQARTVVTTDPEKGFLKRIADREDLVTLQVPPEVGGRFSVLSPVGLLPAAVAGLDVEALLAGAARCVEELEEQGAEHPAVVGAAMHHLMDASRGRNIRVMMVYADALERLAAWFVQLWAESLGKDGKGSTPHGAVGTTDQHSQLQLYMEGPQDKVIEIVEVREHPRDVGIPGAYEDLEGVGYLSGHTVGELLNVECDATRRALTGAGRPNATIRLGSLSAENLGYLMQALEVQTAVAGALYGVNPYDQPGVEAGKRITYARMGRPGYRA.

The active-site Proton donor is E283. Active-site residues include H304 and K418.

This sequence belongs to the GPI family.

Its subcellular location is the cytoplasm. It catalyses the reaction alpha-D-glucose 6-phosphate = beta-D-fructose 6-phosphate. It participates in carbohydrate biosynthesis; gluconeogenesis. The protein operates within carbohydrate degradation; glycolysis; D-glyceraldehyde 3-phosphate and glycerone phosphate from D-glucose: step 2/4. Functionally, catalyzes the reversible isomerization of glucose-6-phosphate to fructose-6-phosphate. The chain is Glucose-6-phosphate isomerase from Rubrobacter xylanophilus (strain DSM 9941 / JCM 11954 / NBRC 16129 / PRD-1).